A 354-amino-acid chain; its full sequence is Serine/threonine-protein kinase ppk34 (354 aa).

The 292-residue stretch at 40 to 331 folds into the Protein kinase domain; sequence YRLKNMLGYG…IEELLRDPFL (292 aa). Residues 46–54 and lysine 69 each bind ATP; that span reads LGYGACSTV. Aspartate 200 acts as the Proton acceptor in catalysis.

Belongs to the protein kinase superfamily. Ser/Thr protein kinase family.

It localises to the cytoplasm. The protein resides in the nucleus. It carries out the reaction L-seryl-[protein] + ATP = O-phospho-L-seryl-[protein] + ADP + H(+). The enzyme catalyses L-threonyl-[protein] + ATP = O-phospho-L-threonyl-[protein] + ADP + H(+). This chain is Serine/threonine-protein kinase ppk34 (ppk34), found in Schizosaccharomyces pombe (strain 972 / ATCC 24843) (Fission yeast).